The chain runs to 5255 residues: Bacitracin synthase 1 (5255 aa).

Residues 39-612 are domain 1 (isoleucine-activating); it reads LHELFEEQAM…IKELSAFIEA (574 aa). The segment covering 519-531 has biased composition (basic and acidic residues); that stretch reads VDRKALPEPDRTA. The disordered stretch occupies residues 519 to 542; that stretch reads VDRKALPEPDRTAGAENEYEAPRN. The region spanning 539–614 is the Carrier 1 domain; the sequence is APRNETEEKL…ELSAFIEANH (76 aa). S574 is subject to O-(pantetheine 4'-phosphoryl)serine. A cyclization region spans residues 621–1037; it reads TLVTRAADPE…ITWDYVEQIF (417 aa). The domain 2 (cysteine-activating) stretch occupies residues 1109–1648; it reads HHDEVMTYQE…FKNDTIIALD (540 aa). Carrier domains follow at residues 1580–1655, 2616–2691, 3659–3733, and 5166–5241; these read LPEN…KNRE, APRD…VRRR, PPRN…TEET, and APRN…LTAE. Residues S1615, S2651, S3694, and S5201 each carry the O-(pantetheine 4'-phosphoryl)serine modification. Positions 2124–2689 are domain 3 (leucine-activating); that stretch reads GKAIHQLFEE…IKGLRDISVR (566 aa). The segment at 3164-3732 is domain 4 (glutamine-activating); it reads DHPAVAFGDE…KDLSRFITEE (569 aa). Residues 4668–5249 form a domain 5 (isoleucine-activating) region; it reads LHELFEEQAM…AEAESAVSEE (582 aa).

It belongs to the ATP-dependent AMP-binding enzyme family. Large multienzyme complex of BA1, BA2 and BA3. Requires pantetheine 4'-phosphate as cofactor.

It carries out the reaction L-glutamate = D-glutamate. The protein operates within antibiotic biosynthesis; bacitracin biosynthesis. Its function is as follows. Activates five amino acids, incorporates two D-amino acids, releases and cyclizes the mature bacitracin. The polypeptide is Bacitracin synthase 1 (bacA) (Bacillus licheniformis).